The primary structure comprises 255 residues: Methionine aminopeptidase (255 aa).

Histidine 76 contacts substrate. A divalent metal cation contacts are provided by aspartate 93, aspartate 104, and histidine 167. Substrate is bound at residue histidine 174. Glutamate 201 and glutamate 232 together coordinate a divalent metal cation.

The protein belongs to the peptidase M24A family. Methionine aminopeptidase type 1 subfamily. In terms of assembly, monomer. Requires Co(2+) as cofactor. The cofactor is Zn(2+). Mn(2+) serves as cofactor. Fe(2+) is required as a cofactor.

It catalyses the reaction Release of N-terminal amino acids, preferentially methionine, from peptides and arylamides.. Removes the N-terminal methionine from nascent proteins. The N-terminal methionine is often cleaved when the second residue in the primary sequence is small and uncharged (Met-Ala-, Cys, Gly, Pro, Ser, Thr, or Val). Requires deformylation of the N(alpha)-formylated initiator methionine before it can be hydrolyzed. The sequence is that of Methionine aminopeptidase from Treponema pallidum (strain Nichols).